The primary structure comprises 414 residues: Bystin (414 aa).

Over residues 1–11 the composition is skewed to basic residues; the sequence is MSAKRNTKLRH. Positions 1–91 are disordered; sequence MSAKRNTKLR…PSDDEGQADD (91 aa). Basic and acidic residues predominate over residues 12 to 24; that stretch reads APLEHAYVDDKSV. The span at 25–34 shows a compositional bias: basic residues; it reads RRNKRSKQRG.

The protein belongs to the bystin family.

Its subcellular location is the nucleus. It localises to the nucleolus. Functionally, required for processing of 20S pre-rRNA precursor and biogenesis of 40S ribosomal subunits. This is Bystin (bysl) from Monosiga brevicollis (Choanoflagellate).